Here is a 311-residue protein sequence, read N- to C-terminus: NEDD4 family-interacting protein 2 (311 aa).

The interval 1-133 (RRSASDAELS…PPYSSITVEA (133 aa)) is disordered. Residues 1–206 (RRSASDAELS…VEQLRVGNDG (206 aa)) are Cytoplasmic-facing. Low complexity predominate over residues 7-22 (AELSAGAEGATGSEAA). Positions 26-37 (DLGGRTRGGGRG) are enriched in gly residues. Low complexity predominate over residues 38 to 47 (SAAAAATTST). Positions 48-75 (REAEGAERRGDTPARKPDPEAGRMDHHQ) are enriched in basic and acidic residues. The span at 92 to 101 (ESSAVEQPST) shows a compositional bias: polar residues. Residues 102 to 120 (SSLAAPTVEAAASAPALDP) show a composition bias toward low complexity. The interval 123 to 126 (PPPY) is interaction with NEDD4. The short motif at 123-126 (PPPY) is the PPxY motif 1 element. Phosphotyrosine; by SRC is present on residues Tyr126, Tyr142, Tyr146, and Tyr152. Short sequence motifs (PPxY motif) lie at residues 149–152 (PPPY) and 159–161 (PTY). A helical membrane pass occupies residues 207 to 227 (IFMLAFFMAFIFNWLGFCLSF). Residues 228–232 (CITNT) lie on the Extracellular side of the membrane. Residues 233-253 (IAGRYGAICGFGLSLIKWILI) traverse the membrane as a helical segment. Residues 254–262 (VRFSDYFTG) lie on the Cytoplasmic side of the membrane. Residues 263 to 283 (YFNGQYWLWWIFLVLGLLLFF) traverse the membrane as a helical segment. Over 284–311 (RGFVNYLKVRNMSESMAAAHRTRYFFLL) the chain is Extracellular.

As to quaternary structure, forms heterodimers with NDFIP1. Interacts with HECT domain-containing E3 ubiquitin-protein ligases, including NEDD4. Interacts with NEDD4L. When phosphorylated at Tyr-142, interacts with SRC and LYN SH2 domain. May thus act as a scaffold that recruits SRC to NDFIP1, enhancing NDFIP1 phosphorylation. Interacts with SLC11A2/DMT1. May interact with phosphorylated EGFR. Interacts with KCNH2. In terms of processing, ubiquitinated by NEDD4 and NEDD4L; which does not affect turnover. Also ubiquitinated by ITCH. Undergoes transient tyrosine-phosphorylation following EGF stimulation, most probably catalyzed by SRC. Phosphorylation on Tyr-126, Tyr-146 and Tyr-152 are dependent on the phosphorylation on Tyr-142. Also phosphorylated by LYN and FYN. In terms of tissue distribution, ubiquitously expressed, with highest levels in brain, liver, kidney and testis.

It localises to the endosome membrane. It is found in the golgi apparatus membrane. The protein localises to the endosome. The protein resides in the multivesicular body membrane. Its function is as follows. Activates HECT domain-containing E3 ubiquitin-protein ligases, including ITCH, NEDD4, NEDD4L, SMURF2, WWP1 and WWP2, and consequently modulates the stability of their targets. As a result, may control many cellular processes. Recruits ITCH, NEDD4 and SMURF2 to endosomal membranes. Negatively regulates KCNH2 potassium channel activity by decreasing its cell-surface expression and interfering with channel maturation through recruitment of NEDD4L to the Golgi apparatus and multivesicular body where it mediates KCNH2 degradation. May modulate EGFR signaling. Together with NDFIP1, limits the cytokine signaling and expansion of effector Th2 T-cells by promoting degradation of JAK1, probably by ITCH- and NEDD4L-mediated ubiquitination. This Mus musculus (Mouse) protein is NEDD4 family-interacting protein 2 (Ndfip2).